The chain runs to 778 residues: Probable potassium transporter 13 (778 aa).

Residues 1–28 (MDVEGGGGGGGGAPPRGRNSWGWQKGTL) lie on the Cytoplasmic side of the membrane. The chain crosses the membrane as a helical span at residues 29–49 (LLAYQSFGVVYGDLCISPVYV). The Extracellular portion of the chain corresponds to 50–72 (YKNTFSGKLRLHEEDEEILGVLS). Residues 73–93 (LVFWSLTLIPLLKYIILVLGA) traverse the membrane as a helical segment. The Cytoplasmic portion of the chain corresponds to 94 to 156 (DDNGEGGTFA…AFFEKHYSLR (63 aa)). Residues 157 to 177 (VVLLLFVLMGTSMVIGDGVLT) form a helical membrane-spanning segment. Residues 178–199 (PTMSVLAAVSGLRIKFPELHEN) are Extracellular-facing. The N-linked (GlcNAc...) asparagine glycan is linked to asparagine 199. A helical transmembrane segment spans residues 200-220 (YTVLLACVILIGLFALQHYGT). Residues 221 to 222 (RR) lie on the Cytoplasmic side of the membrane. Residues 223 to 243 (VGFLFAPILISWLTCIGGIGI) form a helical membrane-spanning segment. Over 244–276 (YNIIKWNPSVIRALSPYYIYNFFRKAGKDGWSS) the chain is Extracellular. The chain crosses the membrane as a helical span at residues 277 to 297 (LGGIVLCLTGAEAMFADLGHF). Residues 298-303 (SKLSLR) lie on the Cytoplasmic side of the membrane. Residues 304–324 (LGFTIVVYPCLVLAYMGEAAY) traverse the membrane as a helical segment. Topologically, residues 325–343 (LSKHREDLQSSFYKALPDR) are extracellular. The helical transmembrane segment at 344-364 (VFWPVLFIATLATAVGSQAII) threads the bilayer. Residues 365–395 (SATFSIISQCRALGCFPRIKVVHTSSHVHGQ) lie on the Cytoplasmic side of the membrane. Residues 396–416 (IYIPEVNWVLMSLCLAVTIGF) traverse the membrane as a helical segment. Residues 417–424 (RDTEMIGN) lie on the Extracellular side of the membrane. Residues 425–445 (AYGLAVILVMCATTCLMFLVI) form a helical membrane-spanning segment. The Cytoplasmic segment spans residues 446 to 451 (TTVWNR). Residues 452-472 (WVVWAAAFTVVFGSVELLYLS) traverse the membrane as a helical segment. The Extracellular segment spans residues 473–477 (ACLAK). The chain crosses the membrane as a helical span at residues 478-498 (VPHGGWLPLLLSLTTLLVMST). Topologically, residues 499–778 (WHYGTAMKQQ…LIEVGMAYRV (280 aa)) are cytoplasmic. A compositionally biased stretch (polar residues) spans 655–677 (PATSSSGGSNQHAFDAGTTTSSC). The segment at 655–704 (PATSSSGGSNQHAFDAGTTTSSCEIDATAGGGGRRKVRFDNDGGGGGEEE) is disordered.

The protein belongs to the HAK/KUP transporter (TC 2.A.72.3) family.

Its subcellular location is the membrane. Functionally, high-affinity potassium transporter. The polypeptide is Probable potassium transporter 13 (HAK13) (Oryza sativa subsp. japonica (Rice)).